The chain runs to 239 residues: IkB-like protein (239 aa).

ANK repeat units lie at residues 48–77 (NKIT…YPGE), 87–116 (DGNS…KNGI), 124–153 (NGVT…NPNR), and 158–187 (KGFT…KPLF). A Nuclear localization signal motif is present at residues 81–87 (HYRRDKD). A Nuclear localization signal motif is present at residues 203–214 (KKKPKIIITGCE). Residues 206-213 (PKIIITGC) carry the PxIxITxC motif; Interaction with host PPP3CA motif. The short motif at 228–231 (FLCV) is the FLCV motif element.

It belongs to the asfivirus A238L family. In terms of assembly, interacts with host PPIA. Interacts with host PPP3CA/Calcineurin. Interacts with host RELA/p65; interaction of the 32 kDa form with host RELA results in the formation of a stable complex with NF-kappa-B. Interacts with host PPP3R1. Interacts with host EP300; this interaction inhibits the association of host EP300 with host RELA, JUN and NFATC2. Post-translationally, the protein exists in a 28 kDa and a 32 kDa form, probably due to post-translational modifications which are neither phosphorylation, nor sumoylation.

It localises to the host nucleus. The protein localises to the host cytoplasm. In terms of biological role, ikB-like protein that inhibits the binding of NF-kappa-B to DNA, thereby downregulating pro-inflammatory cytokine production. Forms a heterodimer with the NF-kappa-B subunit RELA/p65 and prevents the activation of the NF-kappa-B transcription factor. Inhibits calcineurin function, which is required for the induction of nuclear factor of activated T cells (NFAT)-dependent immune response genes. Prevents the binding of substrates to calcineurin without affecting the phosphatase activity. Does not contain the serine residues that are phosphorylated by host IkB kinase and thus is not degraded following stimulation of the NFkB pathway. The protein is IkB-like protein (A238L) of Ornithodoros (relapsing fever ticks).